Consider the following 392-residue polypeptide: Formate-dependent phosphoribosylglycinamide formyltransferase (392 aa).

N(1)-(5-phospho-beta-D-ribosyl)glycinamide-binding positions include 22 to 23 (EL) and Glu82. Residues Arg114, Lys155, 160–165 (SSGKGQ), 195–198 (EGVV), and Glu203 contribute to the ATP site. The ATP-grasp domain maps to 119 to 308 (RLAAEELQLP…EFALHVRAFL (190 aa)). 2 residues coordinate Mg(2+): Glu267 and Glu279. Residues Asp286, Lys355, and 362 to 363 (RR) contribute to the N(1)-(5-phospho-beta-D-ribosyl)glycinamide site.

Belongs to the PurK/PurT family. In terms of assembly, homodimer.

The enzyme catalyses N(1)-(5-phospho-beta-D-ribosyl)glycinamide + formate + ATP = N(2)-formyl-N(1)-(5-phospho-beta-D-ribosyl)glycinamide + ADP + phosphate + H(+). It participates in purine metabolism; IMP biosynthesis via de novo pathway; N(2)-formyl-N(1)-(5-phospho-D-ribosyl)glycinamide from N(1)-(5-phospho-D-ribosyl)glycinamide (formate route): step 1/1. Functionally, involved in the de novo purine biosynthesis. Catalyzes the transfer of formate to 5-phospho-ribosyl-glycinamide (GAR), producing 5-phospho-ribosyl-N-formylglycinamide (FGAR). Formate is provided by PurU via hydrolysis of 10-formyl-tetrahydrofolate. The sequence is that of Formate-dependent phosphoribosylglycinamide formyltransferase from Escherichia coli O157:H7.